A 618-amino-acid chain; its full sequence is uncharacterized protein (618 aa).

The interval 1–45 (MSSKSASKLKREAKKAERLAAKGESVKPSKKNGTKNGKDKEVDGV) is disordered. Basic and acidic residues-rich tracts occupy residues 14 to 27 (KKAE…ESVK) and 36 to 45 (NGKDKEVDGV). Residues Ser-50 and Ser-53 each carry the phosphoserine modification. A Phosphothreonine modification is found at Thr-54. A phosphoserine mark is found at Ser-55 and Ser-64. ABC transporter domains follow at residues 76 to 325 (IKID…LKQQ) and 388 to 609 (IAFN…QSRD). Residues 108 to 115 (GDNGSGKS) and 423 to 430 (GKNGTGKS) contribute to the ATP site.

It belongs to the ABC transporter superfamily.

The protein resides in the cytoplasm. This is an uncharacterized protein from Schizosaccharomyces pombe (strain 972 / ATCC 24843) (Fission yeast).